Consider the following 324-residue polypeptide: Reaction center protein M chain (324 aa).

The Cytoplasmic segment spans residues 2–51; it reads ADYQTIYTQIQARGPHITVSGEWGDNDRVGKPFYSYWLGKIGDAQIGPIY. The chain crosses the membrane as a helical span at residues 52–76; that stretch reads LGASGIAAFAFGSTAILIILFNMAA. The Periplasmic segment spans residues 77–110; that stretch reads EVHFDPLQFFRQFFWLGLYPPKAQYGMGIPPLHD. Residues 111 to 137 form a helical membrane-spanning segment; that stretch reads GGWWLMAGLFMTLSLGSWWIRVYSRAR. Residues 138 to 142 lie on the Cytoplasmic side of the membrane; the sequence is ALGLG. Residues 143-166 form a helical membrane-spanning segment; it reads THIAWNFAAAIFFVLCIGCIHPTL. Residues 167–197 lie on the Periplasmic side of the membrane; it reads VGSWSEGVPFGIWPHIDWLTAFSIRYGNFYY. Positions 181 and 201 each coordinate (7R,8Z)-bacteriochlorophyll b. Residues 198–223 form a helical membrane-spanning segment; that stretch reads CPWHGFSIGFAYGCGLLFAAHGATIL. Positions 218 and 233 each coordinate Fe cation. The Cytoplasmic segment spans residues 224–259; sequence AVARFGGDREIEQITDRGTAVERAALFWRWTIGFNA. Trp251 is a binding site for a ubiquinone. The helical transmembrane segment at 260 to 284 threads the bilayer; sequence TIESVHRWGWFFSLMVMVSASVGIL. His265 provides a ligand contact to Fe cation. At 285–324 the chain is on the periplasmic side; it reads LTGTFVDNWYLWCVKHGAAPDYPAYLPATPDPASLPGAPK.

This sequence belongs to the reaction center PufL/M/PsbA/D family. In terms of assembly, reaction center is composed of four bacteriochlorophylls, two bacteriopheophytins, two ubiquinones, one iron, and three highly hydrophobic polypeptide chains (designated L, M, and H).

The protein localises to the cellular chromatophore membrane. The reaction center is a membrane-bound complex that mediates the initial photochemical event in the electron transfer process of photosynthesis. The sequence is that of Reaction center protein M chain (pufM) from Blastochloris viridis (Rhodopseudomonas viridis).